A 374-amino-acid polypeptide reads, in one-letter code: MSKFKSLLLMFGTLILLSGCSNVEVFNAKGPVASSQKFLIIYSIIFMLVIVAVVLTMFAIFIFKYSYNKNSETGKMHHNSLIETIWFVVPIIIVIALSIPTVKTLYDYEKPPESKEDPMVVYAVSAGYKWFFAYPEQKVETVNTLTIPKNRPVVFKLQAMDTMTSFWIPQLGGQKYAMTGMTMNWTLQADETGTFRGRNSNFNGEGFSRQTFKVHSVDQSEFDSWVKDAKSKKTLSQDEFDKQLLPSTPNKELTFSGTHMAFVDPAADPEYIFYAYKRYNYVQKDPNFVAEKDLYKDVTDKPQKPARKVQITNANYKRHGMKPMILGNNDPYDNEFKKEEDHNSKEMEKISKSAKDENASKFGSKADNDHGGGH.

The N-terminal stretch at 1 to 19 is a signal peptide; sequence MSKFKSLLLMFGTLILLSG. C20 carries N-palmitoyl cysteine lipidation. A lipid anchor (S-diacylglycerol cysteine) is attached at C20. The next 2 membrane-spanning stretches (helical) occupy residues 43-63 and 82-102; these read SIIF…IFIF and IETI…IPTV. Residues 321–374 are disordered; that stretch reads MKPMILGNNDPYDNEFKKEEDHNSKEMEKISKSAKDENASKFGSKADNDHGGGH. The span at 334–374 shows a compositional bias: basic and acidic residues; the sequence is NEFKKEEDHNSKEMEKISKSAKDENASKFGSKADNDHGGGH.

The protein belongs to the cytochrome c oxidase subunit 2 family.

It localises to the cell membrane. It carries out the reaction 2 a quinol + O2 = 2 a quinone + 2 H2O. Its function is as follows. Catalyzes quinol oxidation with the concomitant reduction of oxygen to water. Subunit II transfers the electrons from a quinol to the binuclear center of the catalytic subunit I. This is Probable quinol oxidase subunit 2 (qoxA) from Staphylococcus haemolyticus (strain JCSC1435).